Here is an 82-residue protein sequence, read N- to C-terminus: Turripeptide Lol6.1 (82 aa).

A signal peptide spans methionine 1–alanine 23. Positions isoleucine 24–residue 48 are excised as a propeptide. Cystine bridges form between cysteine 54–cysteine 66, cysteine 58–cysteine 71, and cysteine 65–cysteine 77.

In terms of tissue distribution, expressed by the venom duct.

The protein resides in the secreted. In terms of biological role, acts as a neurotoxin by inhibiting an ion channel. The polypeptide is Turripeptide Lol6.1 (Iotyrris olangoensis (Sea snail)).